The primary structure comprises 147 residues: Plasminogen receptor (KT) (147 aa).

Topologically, residues 1–52 (MGFIFSKSMNESMKNQKEFMLMNARLQLERQLIMQSEMRERQMAMQIAWSRE) are extracellular. A helical membrane pass occupies residues 53–73 (FLKYFGTFFGLAAISLTAGAI). Topologically, residues 74-78 (KKKKP) are cytoplasmic. A helical membrane pass occupies residues 79-99 (AFLVPIVPLSFILTYQYDLGY). Over 100 to 147 (GTLLERMKGEAEDILETEKSKLQLPRGMITFESIEKARKEQSRFFIDK) the chain is Extracellular.

Interacts with PLAT and PLAUR. As to expression, expressed in peripheral blood cells and monocytes. Expressed in adrenal medulla.

The protein resides in the cell membrane. In terms of biological role, receptor for plasminogen. Regulates urokinase plasminogen activator-dependent and stimulates tissue-type plasminogen activator-dependent cell surface plasminogen activation. Proposed to be part of a local catecholaminergic cell plasminogen activation system that regulates neuroendocrine prohormone processing. Involved in regulation of inflammatory response; regulates monocyte chemotactic migration and matrix metalloproteinase activation, such as of MMP2 and MMP9. The chain is Plasminogen receptor (KT) (PLGRKT) from Homo sapiens (Human).